Consider the following 494-residue polypeptide: Lysine--tRNA ligase (494 aa).

Mg(2+)-binding residues include Glu-407 and Glu-414.

Belongs to the class-II aminoacyl-tRNA synthetase family. As to quaternary structure, homodimer. The cofactor is Mg(2+).

The protein resides in the cytoplasm. It carries out the reaction tRNA(Lys) + L-lysine + ATP = L-lysyl-tRNA(Lys) + AMP + diphosphate. This is Lysine--tRNA ligase from Lactococcus lactis subsp. cremoris (strain MG1363).